Consider the following 973-residue polypeptide: Nuclear factor NF-kappa-B p105 subunit (973 aa).

An RHD domain is found at 38-245 (ADGPYLQILE…DAIYDSKAPN (208 aa)). At Cys-60 the chain carries S-nitrosocysteine; alternate. A lipid anchor (S-(15-deoxy-Delta12,14-prostaglandin J2-9-yl)cysteine; alternate) is attached at Cys-60. Lys-324 participates in a covalent cross-link: Glycyl lysine isopeptide (Lys-Gly) (interchain with G-Cter in SUMO2). Ser-336 bears the Phosphoserine mark. The Nuclear localization signal motif lies at 359 to 364 (QRKRQK). Residues 371 to 394 (DSFGGGSGAGAGGGGMFGSGGGGG) form a GRR region. The interval 434-467 (TINTKFKNEPRDCAKSDDREILNPPEKETQGEGP) is disordered. The tract at residues 435–973 (INTKFKNEPR…GQDGPIEGKI (539 aa)) is interaction with CFLAR. The span at 439 to 463 (FKNEPRDCAKSDDREILNPPEKETQ) shows a compositional bias: basic and acidic residues. Lys-440 carries the N6-acetyllysine modification. Phosphoserine is present on Ser-449. 6 ANK repeats span residues 540-570 (NGDS…SISD), 579-608 (LYQT…DLSL), 612-641 (WGNS…AALL), 648-677 (EGLN…EVNA), 682-711 (SGRT…ALVD), and 716-745 (DGTT…DPLV). The tract at residues 648–682 (EGLNAIHIAVMSNSLSCLQLLVAAGAEVNAQEQKS) is essential for interaction with HIF1AN. Asn-676 is subject to (3S)-3-hydroxyasparagine; by HIF1AN. Ser-757 is modified (phosphoserine). The ANK 7 repeat unit spans residues 769–799 (PGTTPLDMAANWQVFDILNGKPYEPVFTSDD). The Death domain maps to 803–890 (QGDIKQLTED…EAIEVIQAAF (88 aa)). Ser-898 carries the phosphoserine modification. Position 912 is a phosphoserine; by GSK3-beta; in vitro (Ser-912). Ser-928 bears the Phosphoserine mark. Residues Ser-932 and Ser-937 each carry the phosphoserine; by IKKB modification. A Phosphoserine modification is found at Ser-942. Thr-948 carries the phosphothreonine modification.

In terms of assembly, component of the NF-kappa-B p65-p50 complex. Homodimer; component of the NF-kappa-B p50-p50 complex. Component of the NF-kappa-B p105-p50 complex. Component of the NF-kappa-B p50-c-Rel complex. Component of a complex consisting of the NF-kappa-B p50-p50 homodimer and BCL3. Also interacts with MAP3K8. NF-kappa-B p50 subunit interacts with NCOA3 coactivator, which may coactivate NF-kappa-B dependent expression via its histone acetyltransferase activity. Interacts with TSC22D3; this interaction prevents nuclear translocation and DNA-binding. Interacts with SPAG9 and UNC5CL. NFKB1/p105 interacts with CFLAR; the interaction inhibits p105 processing into p50. NFKB1/p105 forms a ternary complex with MAP3K8 and TNIP2. Interacts with GSK3B; the interaction prevents processing of p105 to p50. NFKB1/p50 interacts with NFKBIE. NFKB1/p50 interacts with NFKBIZ. Nuclear factor NF-kappa-B p50 subunit interacts with NFKBID. Directly interacts with MEN1. Interacts with HIF1AN. Interacts with FEM1A; interaction is direct. Generation of the NF-kappa-B p50 (Nuclear factor NF-kappa-B p50 subunit) transcription factor takes place both cotranslationally and post-translationally via non-mutually exclusive mechanisms. A cotranslational processing allows the production of both p50 and p105 (Nuclear factor NF-kappa-B p105 subunit) from a single NFKB1 mRNA. While translation occurs, the particular unfolded structure after the GRR repeat region acts as a substrate for the proteasome, promoting degradation of the C-terminus. The GRR acts as a proteasomal 'stop signal', protecting the region upstream of the GRR from degradation and promoting generation of p50. It is unclear if limited proteasome degradation during cotranslational processing depends on ubiquitination. NF-kappa-B p50 is also generated post-translationally following ubiquitination by the KPC complex, leading to limited processing by the proteasome downstream of the GRR region, thereby generating p50. In terms of processing, phosphorylation at the C-terminus by IKBKB/IKKB acts as a signal for ubiquitination and promotes either complete degradation or processing to generate the NF-kappa-B p50 (Nuclear factor NF-kappa-B p50 subunit). Phosphorylation at Ser-912 primes p105 for proteolytic processing in response to TNF-alpha stimulation. Phosphorylation at Ser-928, Ser-932 and Ser-937 are required for BTRC/BTRCP-mediated ubiquitination and proteolysis. Phosphorylation at Ser-932 is also required for ubiquitination by the KPC complex and limited processing to generate NF-kappa-B p50 (Nuclear factor NF-kappa-B p50 subunit). Post-translationally, polyubiquitinated at multiple Lys residues in the C-terminus. Polyubiquitinated by the SCF(FBXW11) and SCF(BTRC) complexes following phosphorylation at Ser-928, Ser-932 and Ser-937, leading to its complete degradation. In contrast, polyubiquitination by the KPC complex following phosphorylation at Ser-932 leads to limited proteosomal processing and generation of the active NF-kappa-B p50 (Nuclear factor NF-kappa-B p50 subunit). S-nitrosylation of Cys-60 affects DNA binding. In terms of processing, the covalent modification of cysteine by 15-deoxy-Delta12,14-prostaglandin-J2 is autocatalytic and reversible. It may occur as an alternative to other cysteine modifications, such as S-nitrosylation and S-palmitoylation.

It is found in the cytoplasm. Its subcellular location is the nucleus. Its function is as follows. NF-kappa-B is a pleiotropic transcription factor present in almost all cell types and is the endpoint of a series of signal transduction events that are initiated by a vast array of stimuli related to many biological processes such as inflammation, immunity, differentiation, cell growth, tumorigenesis and apoptosis. NF-kappa-B is a homo- or heterodimeric complex formed by the Rel-like domain-containing proteins RELA/p65, RELB, NFKB1/p105, NFKB1/p50, REL and NFKB2/p52 and the heterodimeric p65-p50 complex appears to be most abundant one. The dimers bind at kappa-B sites in the DNA of their target genes and the individual dimers have distinct preferences for different kappa-B sites that they can bind with distinguishable affinity and specificity. Different dimer combinations act as transcriptional activators or repressors, respectively. NF-kappa-B is controlled by various mechanisms of post-translational modification and subcellular compartmentalization as well as by interactions with other cofactors or corepressors. NF-kappa-B complexes are held in the cytoplasm in an inactive state complexed with members of the NF-kappa-B inhibitor (I-kappa-B) family. In a conventional activation pathway, I-kappa-B is phosphorylated by I-kappa-B kinases (IKKs) in response to different activators, subsequently degraded thus liberating the active NF-kappa-B complex which translocates to the nucleus. NF-kappa-B heterodimeric p65-p50 and RelB-p50 complexes are transcriptional activators. The NF-kappa-B p50-p50 homodimer is a transcriptional repressor, but can act as a transcriptional activator when associated with BCL3. NFKB1 appears to have dual functions such as cytoplasmic retention of attached NF-kappa-B proteins by p105 and generation of p50 by a cotranslational processing. The proteasome-mediated process ensures the production of both p50 and p105 and preserves their independent function, although processing of NFKB1/p105 also appears to occur post-translationally. p50 binds to the kappa-B consensus sequence 5'-GGRNNYYCC-3', located in the enhancer region of genes involved in immune response and acute phase reactions. In a complex with MAP3K8, NFKB1/p105 represses MAP3K8-induced MAPK signaling; active MAP3K8 is released by proteasome-dependent degradation of NFKB1/p105. In terms of biological role, P105 is the precursor of the active p50 subunit (Nuclear factor NF-kappa-B p50 subunit) of the nuclear factor NF-kappa-B. Acts as a cytoplasmic retention of attached NF-kappa-B proteins by p105. Functionally, constitutes the active form, which associates with RELA/p65 to form the NF-kappa-B p65-p50 complex to form a transcription factor. Together with RELA/p65, binds to the kappa-B consensus sequence 5'-GGRNNYYCC-3', located in the enhancer region of genes involved in immune response and acute phase reactions. The protein is Nuclear factor NF-kappa-B p105 subunit (Nfkb1) of Rattus norvegicus (Rat).